Here is a 657-residue protein sequence, read N- to C-terminus: Protein translocase subunit SecA 2 (657 aa).

ATP-binding positions include Gln93, 111–115 (GEGKT), and Asp531.

This sequence belongs to the SecA family. In terms of assembly, monomer and homodimer. Part of the essential Sec protein translocation apparatus which comprises SecA, SecYEG and auxiliary proteins SecDF. Other proteins may also be involved.

The protein localises to the cell inner membrane. It is found in the cytoplasm. It catalyses the reaction ATP + H2O + cellular proteinSide 1 = ADP + phosphate + cellular proteinSide 2.. Part of the Sec protein translocase complex. Interacts with the SecYEG preprotein conducting channel. Has a central role in coupling the hydrolysis of ATP to the transfer of proteins into and across the cell membrane, serving as an ATP-driven molecular motor driving the stepwise translocation of polypeptide chains across the membrane. The sequence is that of Protein translocase subunit SecA 2 from Rhodopirellula baltica (strain DSM 10527 / NCIMB 13988 / SH1).